The following is a 439-amino-acid chain: Glutamine synthetase (439 aa).

Residues 12–93 (RSPKFVQLIF…VYGYIYKDGK (82 aa)) form the GS beta-grasp domain. The GS catalytic domain occupies 99 to 439 (PRGVLKRVIE…EWELERYFFI (341 aa)). Mg(2+) is bound by residues Glu122 and Glu124. An ATP-binding site is contributed by Glu172. Glu177 and Glu184 together coordinate Mg(2+). L-glutamate is bound at residue Gly229. His233 serves as a coordination point for Mg(2+). Residues 235–237 (HIS) and Ser237 contribute to the ATP site. Residues Arg283, Glu289, and Arg301 each coordinate L-glutamate. Arg301 and Arg306 together coordinate ATP. Glu318 is a Mg(2+) binding site. Arg320 lines the L-glutamate pocket.

The protein belongs to the glutamine synthetase family. As to quaternary structure, oligomer of 12 subunits arranged in the form of two hexagons. Mg(2+) is required as a cofactor.

It localises to the cytoplasm. The enzyme catalyses L-glutamate + NH4(+) + ATP = L-glutamine + ADP + phosphate + H(+). Its function is as follows. Probably involved in nitrogen metabolism via ammonium assimilation. Catalyzes the ATP-dependent biosynthesis of glutamine from glutamate and ammonia. The chain is Glutamine synthetase from Pyrococcus abyssi (strain GE5 / Orsay).